Consider the following 352-residue polypeptide: Chorismate synthase (352 aa).

Arg48 contributes to the NADP(+) binding site. FMN is bound by residues 125–127, 238–239, Gly278, 293–297, and Arg319; these read RSS, NA, and KPTSS.

This sequence belongs to the chorismate synthase family. In terms of assembly, homotetramer. The cofactor is FMNH2.

The catalysed reaction is 5-O-(1-carboxyvinyl)-3-phosphoshikimate = chorismate + phosphate. It functions in the pathway metabolic intermediate biosynthesis; chorismate biosynthesis; chorismate from D-erythrose 4-phosphate and phosphoenolpyruvate: step 7/7. Catalyzes the anti-1,4-elimination of the C-3 phosphate and the C-6 proR hydrogen from 5-enolpyruvylshikimate-3-phosphate (EPSP) to yield chorismate, which is the branch point compound that serves as the starting substrate for the three terminal pathways of aromatic amino acid biosynthesis. This reaction introduces a second double bond into the aromatic ring system. The protein is Chorismate synthase of Legionella pneumophila subsp. pneumophila (strain Philadelphia 1 / ATCC 33152 / DSM 7513).